Reading from the N-terminus, the 495-residue chain is DUF21 domain-containing protein At4g14230 (495 aa).

Residues 1–42 (MHPINAVVAARMLAGISQSNALQSEAIPFGSLEWITYAGISC) are Extracellular-facing. Residues 30–212 (GSLEWITYAG…GKGGELTHDE (183 aa)) enclose the CNNM transmembrane domain. The helical transmembrane segment at 43-63 (FLVLFAGIMSGLTLGLMSLGL) threads the bilayer. The Cytoplasmic portion of the chain corresponds to 64–92 (VELEILQRSGTPKEKKQSAAIFPVVQKQH). The helical transmembrane segment at 93–113 (QLLVTLLLFNALAMEGLPIYL) threads the bilayer. Topologically, residues 114–120 (DKIFNEY) are extracellular. A helical transmembrane segment spans residues 121–141 (VAIILSVTFVLFVGEVIPQAI). The Cytoplasmic portion of the chain corresponds to 142 to 146 (CTRYG). The chain crosses the membrane as a helical span at residues 147 to 167 (LAVGANLVWLVRILMVLSYPI). Topologically, residues 168–495 (SFPIAKMLDW…TMTGPPQGNN (328 aa)) are extracellular. CBS domains lie at 231 to 291 (MTPI…TGTL), 296 to 356 (GIRR…NNSE), and 357 to 426 (LTAP…IVDE). Residues 330-354 (KGKSKGHPSTLHEENSGESNVSSNN) are disordered. A glycan (N-linked (GlcNAc...) asparagine) is linked at Asn-349. The residue at position 352 (Ser-352) is a Phosphoserine. Asn-353 is a glycosylation site (N-linked (GlcNAc...) asparagine). Residues 455–495 (SGRRLLGPKGSGGPKTPKASSTPKPDDKLMGTMTGPPQGNN) form a disordered region. Residues 456-477 (GRRLLGPKGSGGPKTPKASSTP) are compositionally biased toward low complexity.

It localises to the membrane. The polypeptide is DUF21 domain-containing protein At4g14230 (CBSDUF2) (Arabidopsis thaliana (Mouse-ear cress)).